An 81-amino-acid polypeptide reads, in one-letter code: ATP synthase subunit c (81 aa).

2 helical membrane passes run 7–27 (AASVLSAALAIGLGSLGPGLG) and 57–77 (LAFMEALTIYGLVVALVLLFA).

This sequence belongs to the ATPase C chain family. As to quaternary structure, F-type ATPases have 2 components, F(1) - the catalytic core - and F(0) - the membrane proton channel. F(1) has five subunits: alpha(3), beta(3), gamma(1), delta(1), epsilon(1). F(0) has four main subunits: a(1), b(1), b'(1) and c(10-14). The alpha and beta chains form an alternating ring which encloses part of the gamma chain. F(1) is attached to F(0) by a central stalk formed by the gamma and epsilon chains, while a peripheral stalk is formed by the delta, b and b' chains.

Its subcellular location is the cellular thylakoid membrane. F(1)F(0) ATP synthase produces ATP from ADP in the presence of a proton or sodium gradient. F-type ATPases consist of two structural domains, F(1) containing the extramembraneous catalytic core and F(0) containing the membrane proton channel, linked together by a central stalk and a peripheral stalk. During catalysis, ATP synthesis in the catalytic domain of F(1) is coupled via a rotary mechanism of the central stalk subunits to proton translocation. Its function is as follows. Key component of the F(0) channel; it plays a direct role in translocation across the membrane. A homomeric c-ring of between 10-14 subunits forms the central stalk rotor element with the F(1) delta and epsilon subunits. This chain is ATP synthase subunit c, found in Synechococcus sp. (strain JA-3-3Ab) (Cyanobacteria bacterium Yellowstone A-Prime).